The primary structure comprises 285 residues: uncharacterized protein (285 aa).

Residues 92–199 form the Guanylate cyclase domain; the sequence is TLLLADVEES…PTINRTARLR (108 aa).

This sequence belongs to the adenylyl cyclase class-4/guanylyl cyclase family.

This is an uncharacterized protein from Mycobacterium tuberculosis (strain CDC 1551 / Oshkosh).